The sequence spans 159 residues: Nucleotide-binding protein PSPPH_4093 (159 aa).

It belongs to the YajQ family.

Its function is as follows. Nucleotide-binding protein. In Pseudomonas savastanoi pv. phaseolicola (strain 1448A / Race 6) (Pseudomonas syringae pv. phaseolicola (strain 1448A / Race 6)), this protein is Nucleotide-binding protein PSPPH_4093.